The sequence spans 375 residues: Alcohol dehydrogenase 1 (375 aa).

Ser-1 is modified (N-acetylserine). 7 residues coordinate Zn(2+): Cys-46, His-67, Cys-97, Cys-100, Cys-103, Cys-111, and Cys-174. NAD(+)-binding positions include 199–204 (GLGGVG), Asp-223, Lys-228, 293–295 (VGV), and Arg-370.

This sequence belongs to the zinc-containing alcohol dehydrogenase family. Class-I subfamily. Homodimer. Zn(2+) is required as a cofactor.

Its subcellular location is the cytoplasm. It carries out the reaction a primary alcohol + NAD(+) = an aldehyde + NADH + H(+). It catalyses the reaction a secondary alcohol + NAD(+) = a ketone + NADH + H(+). This chain is Alcohol dehydrogenase 1, found in Naja naja (Indian cobra).